Reading from the N-terminus, the 186-residue chain is Crossover junction endodeoxyribonuclease RuvC (186 aa).

Catalysis depends on residues Asp-14, Glu-73, and Asp-145. Mg(2+)-binding residues include Asp-14, Glu-73, and Asp-145. The interval 162–186 (GRSLPPSRGRRRSGSRQRWRDYRPS) is disordered. Positions 169 to 178 (RGRRRSGSRQ) are enriched in basic residues.

This sequence belongs to the RuvC family. As to quaternary structure, homodimer which binds Holliday junction (HJ) DNA. The HJ becomes 2-fold symmetrical on binding to RuvC with unstacked arms; it has a different conformation from HJ DNA in complex with RuvA. In the full resolvosome a probable DNA-RuvA(4)-RuvB(12)-RuvC(2) complex forms which resolves the HJ. Requires Mg(2+) as cofactor.

The protein resides in the cytoplasm. The enzyme catalyses Endonucleolytic cleavage at a junction such as a reciprocal single-stranded crossover between two homologous DNA duplexes (Holliday junction).. In terms of biological role, the RuvA-RuvB-RuvC complex processes Holliday junction (HJ) DNA during genetic recombination and DNA repair. Endonuclease that resolves HJ intermediates. Cleaves cruciform DNA by making single-stranded nicks across the HJ at symmetrical positions within the homologous arms, yielding a 5'-phosphate and a 3'-hydroxyl group; requires a central core of homology in the junction. The consensus cleavage sequence is 5'-(A/T)TT(C/G)-3'. Cleavage occurs on the 3'-side of the TT dinucleotide at the point of strand exchange. HJ branch migration catalyzed by RuvA-RuvB allows RuvC to scan DNA until it finds its consensus sequence, where it cleaves and resolves the cruciform DNA. This is Crossover junction endodeoxyribonuclease RuvC from Chromohalobacter salexigens (strain ATCC BAA-138 / DSM 3043 / CIP 106854 / NCIMB 13768 / 1H11).